A 321-amino-acid chain; its full sequence is XylDLEGF operon transcriptional activator 1 (321 aa).

In terms of domain architecture, HTH araC/xylS-type spans 214 to 315; it reads ERVVQFIEEN…GELPSDTLRQ (102 aa). 2 consecutive DNA-binding regions (H-T-H motif) follow at residues 231-252 and 282-305; these read ERLA…EKHA and ITEI…RSAF.

The protein localises to the cytoplasm. Its function is as follows. Regulatory protein of the TOL plasmid xyl operons. XylS activates the xylXYZLTEGFJQKIH operon required for the degradation of toluene, m-xylene and p-xylene. The sequence is that of XylDLEGF operon transcriptional activator 1 (xylS1) from Pseudomonas putida (Arthrobacter siderocapsulatus).